A 154-amino-acid chain; its full sequence is Large ribosomal subunit protein uL22c (154 aa).

It belongs to the universal ribosomal protein uL22 family. In terms of assembly, part of the 50S ribosomal subunit.

It is found in the plastid. Its subcellular location is the chloroplast. Its function is as follows. This protein binds specifically to 23S rRNA. Functionally, the globular domain of the protein is located near the polypeptide exit tunnel on the outside of the subunit, while an extended beta-hairpin is found that lines the wall of the exit tunnel in the center of the 70S ribosome. In Platanus occidentalis (Sycamore), this protein is Large ribosomal subunit protein uL22c (rpl22).